We begin with the raw amino-acid sequence, 453 residues long: 3-phosphoshikimate 1-carboxyvinyltransferase (453 aa).

The interval 1–27 (MSHDSEPQPVTATPGGPLNGSLKPPGD) is disordered. Positions 28, 29, and 33 each coordinate 3-phosphoshikimate. K28 serves as a coordination point for phosphoenolpyruvate. Phosphoenolpyruvate-binding residues include G101 and R129. 3-phosphoshikimate contacts are provided by S175, Q177, D330, and K357. Q177 contributes to the phosphoenolpyruvate binding site. The Proton acceptor role is filled by D330. Residues R361 and R405 each contribute to the phosphoenolpyruvate site.

This sequence belongs to the EPSP synthase family. As to quaternary structure, monomer.

The protein resides in the cytoplasm. The enzyme catalyses 3-phosphoshikimate + phosphoenolpyruvate = 5-O-(1-carboxyvinyl)-3-phosphoshikimate + phosphate. The protein operates within metabolic intermediate biosynthesis; chorismate biosynthesis; chorismate from D-erythrose 4-phosphate and phosphoenolpyruvate: step 6/7. Its function is as follows. Catalyzes the transfer of the enolpyruvyl moiety of phosphoenolpyruvate (PEP) to the 5-hydroxyl of shikimate-3-phosphate (S3P) to produce enolpyruvyl shikimate-3-phosphate and inorganic phosphate. The sequence is that of 3-phosphoshikimate 1-carboxyvinyltransferase from Methylorubrum extorquens (strain CM4 / NCIMB 13688) (Methylobacterium extorquens).